Reading from the N-terminus, the 406-residue chain is Coenzyme A biosynthesis bifunctional protein CoaBC (406 aa).

A phosphopantothenoylcysteine decarboxylase region spans residues 2 to 190; sequence SLAGKKIVLG…SPVNDLKHLN (189 aa). Cys158 acts as the Proton donor in catalysis. The interval 191–406 is phosphopantothenate--cysteine ligase; that stretch reads IMITAGPTRE…VTRYDEKNRR (216 aa). CTP is bound by residues 273–275, Asp279, Lys289, 308–311, Phe327, Lys341, and Lys345; these read GCA and PDIV.

In the N-terminal section; belongs to the HFCD (homo-oligomeric flavin containing Cys decarboxylase) superfamily. The protein in the C-terminal section; belongs to the PPC synthetase family. It depends on Mg(2+) as a cofactor. FMN serves as cofactor.

The catalysed reaction is N-[(R)-4-phosphopantothenoyl]-L-cysteine + H(+) = (R)-4'-phosphopantetheine + CO2. It carries out the reaction (R)-4'-phosphopantothenate + L-cysteine + CTP = N-[(R)-4-phosphopantothenoyl]-L-cysteine + CMP + diphosphate + H(+). The protein operates within cofactor biosynthesis; coenzyme A biosynthesis; CoA from (R)-pantothenate: step 2/5. It functions in the pathway cofactor biosynthesis; coenzyme A biosynthesis; CoA from (R)-pantothenate: step 3/5. In terms of biological role, catalyzes two sequential steps in the biosynthesis of coenzyme A. In the first step cysteine is conjugated to 4'-phosphopantothenate to form 4-phosphopantothenoylcysteine. In the second step the latter compound is decarboxylated to form 4'-phosphopantotheine. The polypeptide is Coenzyme A biosynthesis bifunctional protein CoaBC (Escherichia coli O6:H1 (strain CFT073 / ATCC 700928 / UPEC)).